The primary structure comprises 481 residues: Fibrinogen beta chain (481 aa).

The first 19 residues, 1–19 (MRHLWLLLLLCVFSVQTQA), serve as a signal peptide directing secretion. A disordered region spans residues 22–81 (DDYDEPTDSLDARGHRPVDRRKEEPPSLRPAPPPISGGGYRARPAKATANQKKVERRPPD). A compositionally biased stretch (basic and acidic residues) spans 31–47 (LDARGHRPVDRRKEEPP). The beta-chain polymerization, binding distal domain of another fibrin stretch occupies residues 35 to 37 (GHR). A coiled-coil region spans residues 149–213 (QAQVKENENV…SDISAQMEYC (65 aa)). Intrachain disulfides connect C221/C306 and C231/C260. The Fibrinogen C-terminal domain maps to 222–478 (NIPVVSGKEC…RMSMKIRPFF (257 aa)). N384 carries an N-linked (GlcNAc...) asparagine glycan. C414 and C427 are disulfide-bonded.

Heterohexamer; disulfide linked. Contains 2 sets of 3 non-identical chains (alpha, beta and gamma). The 2 heterotrimers are in head to head conformation with the N-termini in a small central domain. Conversion of fibrinogen to fibrin is triggered by thrombin, which cleaves fibrinopeptides A and B from alpha and beta chains, and thus exposes the N-terminal polymerization sites responsible for the formation of the soft clot.

It localises to the secreted. In terms of biological role, cleaved by the protease thrombin to yield monomers which, together with fibrinogen alpha (FGA) and fibrinogen gamma (FGG), polymerize to form an insoluble fibrin matrix. Fibrin has a major function in hemostasis as one of the primary components of blood clots. In addition, functions during the early stages of wound repair to stabilize the lesion and guide cell migration during re-epithelialization. Was originally thought to be essential for platelet aggregation, based on in vitro studies using anticoagulated blood. However, subsequent studies have shown that it is not absolutely required for thrombus formation in vivo. Enhances expression of SELP in activated platelets via an ITGB3-dependent pathway. Maternal fibrinogen is essential for successful pregnancy. Fibrin deposition is also associated with infection, where it protects against IFNG-mediated hemorrhage. May also facilitate the immune response via both innate and T-cell mediated pathways. This is Fibrinogen beta chain (Fgb) from Mus musculus (Mouse).